The chain runs to 62 residues: Large ribosomal subunit protein bL32 (62 aa).

This sequence belongs to the bacterial ribosomal protein bL32 family.

The polypeptide is Large ribosomal subunit protein bL32 (rpmF) (Treponema pallidum (strain Nichols)).